The primary structure comprises 309 residues: Ribonuclease Z (309 aa).

7 residues coordinate Zn(2+): His-63, His-65, Asp-67, His-68, His-145, Asp-216, and His-274. The active-site Proton acceptor is Asp-67.

The protein belongs to the RNase Z family. As to quaternary structure, homodimer. Zn(2+) is required as a cofactor.

It catalyses the reaction Endonucleolytic cleavage of RNA, removing extra 3' nucleotides from tRNA precursor, generating 3' termini of tRNAs. A 3'-hydroxy group is left at the tRNA terminus and a 5'-phosphoryl group is left at the trailer molecule.. In terms of biological role, zinc phosphodiesterase, which displays some tRNA 3'-processing endonuclease activity. Probably involved in tRNA maturation, by removing a 3'-trailer from precursor tRNA. In Streptococcus pneumoniae (strain 70585), this protein is Ribonuclease Z.